The sequence spans 547 residues: MNPSTAQARVVVDELVRGGVHDVVLCPGSRNAPLAFALADADRAGRLRLHVRIDERTAGFLAIGLAVADRAPVCVAMTSGTAVANLGPAVVEANYARVPLIVLSANRPYELLGTGANQTFEQLGYFGNQVRANISLGLAPELSSGSPGDMTSLNAQWRSATCRVVVAATGSRSANAGPVQFDIPLREPLVPTFDDDGSCPPGRPDGKPWTHTPPVTFDQPLDIDLTPDTVVIAGHGAGVHPNLADLPTVAEPTAPPAANPLHPMALRLLRPKQVIMLGRPTLHRPVSALLADPSVPVYALTTGPRWPDVSGNSQATGTRAVTSGTPDPAWLRRCKEVNDHAVAAVREQLAAHPLTTGLHVAAAVADAVRPGDQLVLGASNPVRDAALVGFTPHGVQVRSNRGVAGIDGTVSTAIGAALAHDRTGGRTIALMGDLTFVHDSSGLLIGPTEPTPRNLTIVVSNDNGGGIFELLEQGDPRFSDVSSRVFGTPHDVDVGALCRAYHVDNRQIEVGQLADALDEPHEGMRVLEVKADRSSLRALHASIKAAL.

It belongs to the TPP enzyme family. MenD subfamily. Homodimer. Mg(2+) serves as cofactor. Requires Mn(2+) as cofactor. It depends on thiamine diphosphate as a cofactor.

It catalyses the reaction isochorismate + 2-oxoglutarate + H(+) = 5-enolpyruvoyl-6-hydroxy-2-succinyl-cyclohex-3-ene-1-carboxylate + CO2. It functions in the pathway quinol/quinone metabolism; 1,4-dihydroxy-2-naphthoate biosynthesis; 1,4-dihydroxy-2-naphthoate from chorismate: step 2/7. The protein operates within quinol/quinone metabolism; menaquinone biosynthesis. In terms of biological role, catalyzes the thiamine diphosphate-dependent decarboxylation of 2-oxoglutarate and the subsequent addition of the resulting succinic semialdehyde-thiamine pyrophosphate anion to isochorismate to yield 2-succinyl-5-enolpyruvyl-6-hydroxy-3-cyclohexene-1-carboxylate (SEPHCHC). This is 2-succinyl-5-enolpyruvyl-6-hydroxy-3-cyclohexene-1-carboxylate synthase from Mycobacterium sp. (strain KMS).